A 268-amino-acid chain; its full sequence is Hydroxyethylthiazole kinase (268 aa).

Met47 is a substrate binding site. ATP-binding residues include Lys123 and Thr170. Residue Ala196 participates in substrate binding.

This sequence belongs to the Thz kinase family. Mg(2+) serves as cofactor.

The catalysed reaction is 5-(2-hydroxyethyl)-4-methylthiazole + ATP = 4-methyl-5-(2-phosphooxyethyl)-thiazole + ADP + H(+). It functions in the pathway cofactor biosynthesis; thiamine diphosphate biosynthesis; 4-methyl-5-(2-phosphoethyl)-thiazole from 5-(2-hydroxyethyl)-4-methylthiazole: step 1/1. Functionally, catalyzes the phosphorylation of the hydroxyl group of 4-methyl-5-beta-hydroxyethylthiazole (THZ). The polypeptide is Hydroxyethylthiazole kinase (Finegoldia magna (strain ATCC 29328 / DSM 20472 / WAL 2508) (Peptostreptococcus magnus)).